We begin with the raw amino-acid sequence, 1133 residues long: Lysylphosphatidylglycerol biosynthesis bifunctional protein LysX (1133 aa).

A phosphatidylglycerol lysyltransferase region spans residues 1–626 (MTTVDASPGI…LLHHDGSTPD (626 aa)). 7 consecutive transmembrane segments (helical) span residues 43 to 63 (VPAA…IASV), 82 to 102 (LFNF…LAAA), 109 to 129 (IAWL…AVDM), 140 to 160 (FGEN…VLSY), 177 to 197 (AVLV…VELF), 233 to 253 (LNAI…IVLF), and 575 to 595 (LIPR…LPFS). The tract at residues 627–1133 (VSGLQTADVD…TLPFPLAKPH (507 aa)) is lysine--tRNA ligase. Mg(2+) contacts are provided by Asp1045 and Glu1052.

It in the N-terminal section; belongs to the LPG synthetase family. This sequence in the C-terminal section; belongs to the class-II aminoacyl-tRNA synthetase family. The cofactor is Mg(2+).

It is found in the cell membrane. It carries out the reaction tRNA(Lys) + L-lysine + ATP = L-lysyl-tRNA(Lys) + AMP + diphosphate. It catalyses the reaction L-lysyl-tRNA(Lys) + a 1,2-diacyl-sn-glycero-3-phospho-(1'-sn-glycerol) = a 1,2-diacyl-sn-glycero-3-phospho-1'-(3'-O-L-lysyl)-sn-glycerol + tRNA(Lys). Catalyzes the production of L-lysyl-tRNA(Lys)transfer and the transfer of a lysyl group from L-lysyl-tRNA(Lys) to membrane-bound phosphatidylglycerol (PG), which produces lysylphosphatidylglycerol (LPG), one of the components of the bacterial membrane with a positive net charge. LPG synthesis contributes to the resistance to cationic antimicrobial peptides (CAMPs) and likely protects M.tuberculosis against the CAMPs produced by competiting microorganisms (bacteriocins). In fact, the modification of anionic phosphatidylglycerol with positively charged L-lysine results in repulsion of the peptides. The polypeptide is Lysylphosphatidylglycerol biosynthesis bifunctional protein LysX (lysX) (Mycobacterium leprae (strain Br4923)).